A 325-amino-acid chain; its full sequence is Olfactory receptor 14L1 (325 aa).

Over 1-43 (MAQFNKNQLIACRRNGTTTSDFNQTEVAEFFLMGFSNSWDIQI) the chain is Extracellular. Residues 44-64 (VHAALFFLVYLAAVIGNLLII) form a helical membrane-spanning segment. Residues 65–72 (ILTTLDVH) lie on the Cytoplasmic side of the membrane. The helical transmembrane segment at 73–93 (LQTPMYFFLRNLSFLDFCYIS) threads the bilayer. The Extracellular segment spans residues 94-117 (VTIPKSIVSSLTHDTSISFFGCAL). The helical transmembrane segment at 118–138 (QAFFFMDLATTEVAILTVMSY) threads the bilayer. The Cytoplasmic segment spans residues 139–151 (DRYMAICRPLHYE). Residues 152 to 172 (VIINQGVCLRMMAMSWLSGVI) traverse the membrane as a helical segment. Residues 173–214 (CGFMHVIATFSLPFCGRNRIRQFFCNIPQLLSLLDPKVITIE) are Extracellular-facing. The chain crosses the membrane as a helical span at residues 215–235 (IGVMVFGTSLVIISFVVITLS). The Cytoplasmic segment spans residues 236 to 255 (YMYIFSVIMRIPSKEGRSKT). Residues 256-276 (FSTCIPHLVVVTLFMISGSIA) traverse the membrane as a helical segment. Over 277-289 (YVKPISNSPPVLD) the chain is Extracellular. Residues 290-310 (VFLSAFYTVVPPTLNPVIYSL) traverse the membrane as a helical segment. Residues 311–325 (RNRDMKAALRRQCGP) are Cytoplasmic-facing.

Belongs to the G-protein coupled receptor 1 family.

It is found in the cell membrane. Odorant receptor. This Homo sapiens (Human) protein is Olfactory receptor 14L1.